A 105-amino-acid chain; its full sequence is Putative pterin-4-alpha-carbinolamine dehydratase (105 aa).

The protein belongs to the pterin-4-alpha-carbinolamine dehydratase family.

It carries out the reaction (4aS,6R)-4a-hydroxy-L-erythro-5,6,7,8-tetrahydrobiopterin = (6R)-L-erythro-6,7-dihydrobiopterin + H2O. This chain is Putative pterin-4-alpha-carbinolamine dehydratase, found in Sinorhizobium medicae (strain WSM419) (Ensifer medicae).